The following is a 446-amino-acid chain: Tubulin beta-6 chain (446 aa).

8 residues coordinate GTP: Q11, E69, S138, G142, T143, G144, N204, and N226. Residue E69 participates in Mg(2+) binding. Residues 426–446 form a disordered region; it reads QDATADEEEYEDEEEVQADDM. The span at 429–446 shows a compositional bias: acidic residues; it reads TADEEEYEDEEEVQADDM.

It belongs to the tubulin family. Dimer of alpha and beta chains. A typical microtubule is a hollow water-filled tube with an outer diameter of 25 nm and an inner diameter of 15 nM. Alpha-beta heterodimers associate head-to-tail to form protofilaments running lengthwise along the microtubule wall with the beta-tubulin subunit facing the microtubule plus end conferring a structural polarity. Microtubules usually have 13 protofilaments but different protofilament numbers can be found in some organisms and specialized cells. Requires Mg(2+) as cofactor.

It localises to the cytoplasm. Its subcellular location is the cytoskeleton. Its function is as follows. Tubulin is the major constituent of microtubules, a cylinder consisting of laterally associated linear protofilaments composed of alpha- and beta-tubulin heterodimers. Microtubules grow by the addition of GTP-tubulin dimers to the microtubule end, where a stabilizing cap forms. Below the cap, tubulin dimers are in GDP-bound state, owing to GTPase activity of alpha-tubulin. In Zea mays (Maize), this protein is Tubulin beta-6 chain (TUBB6).